We begin with the raw amino-acid sequence, 473 residues long: Mitochondrial adenyl nucleotide antiporter SLC25A24-A (473 aa).

The tract at residues 1–173 (MLEQVQKFLL…RFWKHSTVLD (173 aa)) is regulatory N-terminal domain. The Mitochondrial intermembrane portion of the chain corresponds to 1 to 197 (MLEQVQKFLL…EKKTGQWWKH (197 aa)). EF-hand domains follow at residues 19–54 (DSHT…MGMA), 55–88 (VGKG…EEHE), 86–121 (EHEK…LGIN), and 122–157 (ISLD…NPAD). Ca(2+) is bound by residues D32, N34, D36, K38, E43, D68, N70, D72, H74, E79, D99, N101, D103, K105, E110, D135, D137, T139, T141, and E146. A linker region region spans residues 159–168 (IQQIIRFWKH). Residues 174 to 473 (IGDSLTIPDE…YEKMKIQLGI (300 aa)) form a C-terminal transmembrane transporter domain region. Solcar repeat units follow at residues 192 to 277 (GQWW…YKKL), 285 to 370 (LGTA…LKNY), and 382 to 470 (PGVL…MKIQ). The chain crosses the membrane as a helical span at residues 198–215 (LLAGGMAGAVSRTGTAPL). Residues 216–251 (DRLKVMMQVHGTKGNSNIITGLKQMVKEGGVRSLWR) are Mitochondrial matrix-facing. The helical transmembrane segment at 252 to 271 (GNGVNVIKIAPETAMKFWAY) threads the bilayer. The Mitochondrial intermembrane segment spans residues 272 to 294 (EQYKKLFTSESGKLGTAERFIAG). A helical transmembrane segment spans residues 295-308 (SLAGATAQTSIYPM). Residues 309-344 (EVLKTRLAVGKTGQYSGMFDCAKKIMQKEGILAFYK) lie on the Mitochondrial matrix side of the membrane. A helical transmembrane segment spans residues 345 to 364 (GYIPNILGIIPYAGIDLAIY). At 365 to 387 (ETLKNYWLQNYAKDSANPGVLVL) the chain is on the mitochondrial intermembrane side. Residues 388–405 (LGCGTVSSTCGQLASYPL) form a helical membrane-spanning segment. Topologically, residues 406–444 (ALIRTRMQAQASIEGAPQLNMGGLFRKIVAKEGFFGLYT) are mitochondrial matrix. The helical transmembrane segment at 445 to 464 (GIAPNFLKVLPAVSISYVVY) threads the bilayer. The Mitochondrial intermembrane segment spans residues 465–473 (EKMKIQLGI).

This sequence belongs to the mitochondrial carrier (TC 2.A.29) family. In terms of assembly, monomer.

It is found in the mitochondrion inner membrane. The catalysed reaction is Mg(2+)(out) + phosphate(in) + ATP(out) = Mg(2+)(in) + phosphate(out) + ATP(in). It carries out the reaction ADP(out) + phosphate(in) + H(+)(out) = ADP(in) + phosphate(out) + H(+)(in). The enzyme catalyses AMP(out) + phosphate(in) = AMP(in) + phosphate(out). It catalyses the reaction phosphate(in) + ATP(out) + 2 H(+)(out) = phosphate(out) + ATP(in) + 2 H(+)(in). The catalysed reaction is dADP(in) + ADP(out) = dADP(out) + ADP(in). It carries out the reaction Mg(2+)(in) + ADP(out) + ATP(in) + H(+)(out) = Mg(2+)(out) + ADP(in) + ATP(out) + H(+)(in). The enzyme catalyses ADP(out) + diphosphate(in) = ADP(in) + diphosphate(out). It catalyses the reaction dAMP(in) + ADP(out) + H(+)(out) = dAMP(out) + ADP(in) + H(+)(in). The catalysed reaction is 3'-AMP(in) + ADP(out) + H(+)(out) = 3'-AMP(out) + ADP(in) + H(+)(in). It carries out the reaction dAMP(out) + phosphate(in) = dAMP(in) + phosphate(out). The enzyme catalyses 3'-AMP(out) + phosphate(in) = 3'-AMP(in) + phosphate(out). It catalyses the reaction dADP(out) + phosphate(in) + H(+)(out) = dADP(in) + phosphate(out) + H(+)(in). With respect to regulation, activated by an increase in cytosolic calcium levels that induce a conformational change of the N-terminal regulatory domain, uncapping the channel and allowing transport. Inhibited by bathophenanthroline, mersalyl, p-hydroxymercuribenzoate, bromcresol purple and tannic acid. Functionally, electroneutral antiporter that mediates the transport of adenyl nucleotides through the inner mitochondrial membrane. Originally identified as an ATP-magnesium/inorganic phosphate antiporter, it also acts as a broad specificity adenyl nucleotide antiporter. By regulating the mitochondrial matrix adenyl nucleotide pool could adapt to changing cellular energetic demands and indirectly regulate adenyl nucleotide-dependent metabolic pathways. The polypeptide is Mitochondrial adenyl nucleotide antiporter SLC25A24-A (slc25a24-a) (Xenopus laevis (African clawed frog)).